The sequence spans 118 residues: V-type proton ATPase subunit G 3 (118 aa).

Over residues 1–12 the composition is skewed to polar residues; that stretch reads MASQSQGIQQLL. The segment at 1 to 37 is disordered; that stretch reads MASQSQGIQQLLQAEKRAKDKLEEAKKRKNKRLRQAK. Residues 3–53 adopt a coiled-coil conformation; sequence SQSQGIQQLLQAEKRAKDKLEEAKKRKNKRLRQAKEEATADIDQYRLKREG. Basic and acidic residues predominate over residues 14–26; sequence AEKRAKDKLEEAK.

It belongs to the V-ATPase G subunit family. In terms of assembly, V-ATPase is a heteromultimeric enzyme made up of two complexes: the ATP-hydrolytic V1 complex and the proton translocation V0 complex. The V1 complex consists of three catalytic AB heterodimers that form a heterohexamer, three peripheral stalks each consisting of EG heterodimers, one central rotor including subunits D and F, and the regulatory subunits C and H. The proton translocation complex V0 consists of the proton transport subunit a, a ring of proteolipid subunits c9c'', rotary subunit d, subunits e and f, and two accessory subunits.

In terms of biological role, subunit of the V1 complex of vacuolar(H+)-ATPase (V-ATPase), a multisubunit enzyme composed of a peripheral complex (V1) that hydrolyzes ATP and a membrane integral complex (V0) that translocates protons. V-ATPase is responsible for acidifying and maintaining the pH of intracellular compartments and in some cell types, is targeted to the plasma membrane, where it is responsible for acidifying the extracellular environment. This is V-type proton ATPase subunit G 3 (atp6v1g3) from Xenopus tropicalis (Western clawed frog).